Reading from the N-terminus, the 171-residue chain is 16S rRNA aminocarboxypropyltransferase (171 aa).

S-adenosyl-L-methionine contacts are provided by Thr18, Leu68, Leu91, and Ser110.

Belongs to the TDD superfamily. TSR3 family.

It localises to the cytoplasm. The enzyme catalyses an N(1)-methylpseudouridine in rRNA + S-adenosyl-L-methionine = N(1)-methyl-N(3)-[(3S)-3-amino-3-carboxypropyl]pseudouridine in rRNA + S-methyl-5'-thioadenosine + H(+). In terms of biological role, aminocarboxypropyltransferase that catalyzes the aminocarboxypropyl transfer on pseudouridine corresponding to position 914 in M.jannaschii 16S rRNA. It constitutes the last step in biosynthesis of the hypermodified N1-methyl-N3-(3-amino-3-carboxypropyl) pseudouridine (m1acp3-Psi). This chain is 16S rRNA aminocarboxypropyltransferase, found in Methanosphaera stadtmanae (strain ATCC 43021 / DSM 3091 / JCM 11832 / MCB-3).